Consider the following 534-residue polypeptide: Pentatricopeptide repeat-containing protein At5g50990 (534 aa).

PPR repeat units lie at residues 128-158, 164-198, 199-229, 230-264, 265-295, and 301-331; these read NVIT…MLSF, NKFS…GIEL, NAIL…VKRN, DVSI…HVSP, DSIT…MSRR, and KLEH…MPIE. Positions 336-408 are type E motif; sequence IWRSLLSSSR…AKGKSWLEFG (73 aa). The tract at residues 409–439 is type E(+) motif; that stretch reads GMIHRFKAGDTSHIETKAIYKVLEGLIQKTK. The segment at 440–534 is type DYW motif; it reads SQGFVSDTDL…DGLCSCRDYW (95 aa).

This sequence belongs to the PPR family. PCMP-H subfamily.

The sequence is that of Pentatricopeptide repeat-containing protein At5g50990 (PCMP-H59) from Arabidopsis thaliana (Mouse-ear cress).